The sequence spans 1383 residues: DNA-directed RNA polymerase subunit beta'' (1383 aa).

Residues C220, C289, C296, and C299 each coordinate Zn(2+).

Belongs to the RNA polymerase beta' chain family. RpoC2 subfamily. As to quaternary structure, in plastids the minimal PEP RNA polymerase catalytic core is composed of four subunits: alpha, beta, beta', and beta''. When a (nuclear-encoded) sigma factor is associated with the core the holoenzyme is formed, which can initiate transcription. Zn(2+) serves as cofactor.

It is found in the plastid. The protein resides in the chloroplast. It catalyses the reaction RNA(n) + a ribonucleoside 5'-triphosphate = RNA(n+1) + diphosphate. Functionally, DNA-dependent RNA polymerase catalyzes the transcription of DNA into RNA using the four ribonucleoside triphosphates as substrates. This is DNA-directed RNA polymerase subunit beta'' from Oenothera elata subsp. hookeri (Hooker's evening primrose).